A 239-amino-acid polypeptide reads, in one-letter code: Carboxy-S-adenosyl-L-methionine synthase (239 aa).

S-adenosyl-L-methionine contacts are provided by residues Tyr-35, Gly-64–Ser-66, Asp-114–Leu-115, Asn-129, and Arg-196.

The protein belongs to the class I-like SAM-binding methyltransferase superfamily. Cx-SAM synthase family. Homodimer.

The catalysed reaction is prephenate + S-adenosyl-L-methionine = carboxy-S-adenosyl-L-methionine + 3-phenylpyruvate + H2O. Its function is as follows. Catalyzes the conversion of S-adenosyl-L-methionine (SAM) to carboxy-S-adenosyl-L-methionine (Cx-SAM). In Helicobacter hepaticus (strain ATCC 51449 / 3B1), this protein is Carboxy-S-adenosyl-L-methionine synthase.